The following is a 390-amino-acid chain: Peroxisomal sarcosine oxidase (390 aa).

Asp9–Phe39 contributes to the FAD binding site. Residue Lys126 is modified to N6-acetyllysine. S-8alpha-FAD cysteine is present on Cys319. Positions Ala388–Leu390 match the Microbody targeting signal motif.

Belongs to the MSOX/MTOX family. It depends on FAD as a cofactor. Expressed in the liver and kidney.

The protein localises to the peroxisome. It carries out the reaction sarcosine + O2 + H2O = formaldehyde + glycine + H2O2. The enzyme catalyses L-pipecolate + O2 = L-1-piperideine-6-carboxylate + H2O2 + H(+). In terms of biological role, metabolizes sarcosine and L-pipecolic acid. This is Peroxisomal sarcosine oxidase (PIPOX) from Homo sapiens (Human).